The primary structure comprises 170 residues: Cyclic pyranopterin monophosphate synthase 1 (170 aa).

Residues 79–81 and 116–117 contribute to the substrate site; these read LCH and ME. The active site involves Asp131.

This sequence belongs to the MoaC family. As to quaternary structure, homohexamer; trimer of dimers.

The catalysed reaction is (8S)-3',8-cyclo-7,8-dihydroguanosine 5'-triphosphate = cyclic pyranopterin phosphate + diphosphate. It functions in the pathway cofactor biosynthesis; molybdopterin biosynthesis. In terms of biological role, catalyzes the conversion of (8S)-3',8-cyclo-7,8-dihydroguanosine 5'-triphosphate to cyclic pyranopterin monophosphate (cPMP). The protein is Cyclic pyranopterin monophosphate synthase 1 (moaC1) of Mycobacterium bovis (strain ATCC BAA-935 / AF2122/97).